Consider the following 375-residue polypeptide: MSSHKGSVVAQGNGAPASNREADTVELAELGPLLEEKGKRVIANPPKAEEEQTCPVPQEEEEEVRVLTLPLQAHHAMEKMEEFVYKVWEGRWRVIPYDVLPDWLKDNDYLLHGHRPPMPSFRACFKSIFRIHTETGNIWTHLLGFVLFLFLGILTMLRPNMYFMAPLQEKVVFGMFFLGAVLCLSFSWLFHTVYCHSEKVSRTFSKLDYSGIALLIMGSFVPWLYYSFYCSPQPRLIYLSIVCVLGISAIIVAQWDRFATPKHRQTRAGVFLGLGLSGVVPTMHFTIAEGFVKATTVGQMGWFFLMAVMYITGAGLYAARIPERFFPGKFDIWFQSHQIFHVLVVAAAFVHFYGVSNLQEFRYGLEGGCTDDTLL.

The segment at 1–60 (MSSHKGSVVAQGNGAPASNREADTVELAELGPLLEEKGKRVIANPPKAEEEQTCPVPQEE) is disordered. Topologically, residues 1-136 (MSSHKGSVVA…SIFRIHTETG (136 aa)) are cytoplasmic. Residues 137-157 (NIWTHLLGFVLFLFLGILTML) form a helical membrane-spanning segment. Residues 158-170 (RPNMYFMAPLQEK) lie on the Extracellular side of the membrane. A helical membrane pass occupies residues 171–191 (VVFGMFFLGAVLCLSFSWLFH). H191 lines the Zn(2+) pocket. At 192-203 (TVYCHSEKVSRT) the chain is on the cytoplasmic side. Residues 204-224 (FSKLDYSGIALLIMGSFVPWL) traverse the membrane as a helical segment. Residues 225 to 234 (YYSFYCSPQP) are Extracellular-facing. A helical membrane pass occupies residues 235 to 255 (RLIYLSIVCVLGISAIIVAQW). Residues 256 to 264 (DRFATPKHR) are Cytoplasmic-facing. Residues 265–285 (QTRAGVFLGLGLSGVVPTMHF) form a helical membrane-spanning segment. The Extracellular segment spans residues 286–298 (TIAEGFVKATTVG). The helical transmembrane segment at 299–319 (QMGWFFLMAVMYITGAGLYAA) threads the bilayer. At 320–337 (RIPERFFPGKFDIWFQSH) the chain is on the cytoplasmic side. The Zn(2+) site is built by H337 and H341. A helical transmembrane segment spans residues 338–358 (QIFHVLVVAAAFVHFYGVSNL). Over 359-375 (QEFRYGLEGGCTDDTLL) the chain is Extracellular.

This sequence belongs to the ADIPOR family. In terms of assembly, may form homooligomers and heterooligomers with ADIPOR2. Interacts with APPL2 (via BAR domain); hinders the accessibility of APPL1 to ADIPOR1; negatively regulates adiponectin signaling; ADIPOQ dissociates this interaction and facilitates the recruitment of APPL1 to ADIPOR1. Interacts with APPL1; ADIPOQ enhances this interaction; inhibites adiponectin-stimulated binding of APPL2 to ADIPOR1. As to expression, widely expressed. Highly expressed in heart and skeletal muscle. Expressed at intermediate level in brain, spleen, kidney, liver, placenta, lung and peripheral blood leukocytes. Weakly expressed in colon, thymus and small intestine.

The protein localises to the cell membrane. Receptor for ADIPOQ, an essential hormone secreted by adipocytes that regulates glucose and lipid metabolism. Required for normal glucose and fat homeostasis and for maintaining a normal body weight. ADIPOQ-binding activates a signaling cascade that leads to increased AMPK activity, and ultimately to increased fatty acid oxidation, increased glucose uptake and decreased gluconeogenesis. Has high affinity for globular adiponectin and low affinity for full-length adiponectin. In Homo sapiens (Human), this protein is Adiponectin receptor protein 1.